Reading from the N-terminus, the 462-residue chain is Argininosuccinate lyase (462 aa).

This sequence belongs to the lyase 1 family. Argininosuccinate lyase subfamily.

Its subcellular location is the cytoplasm. It catalyses the reaction 2-(N(omega)-L-arginino)succinate = fumarate + L-arginine. It functions in the pathway amino-acid biosynthesis; L-arginine biosynthesis; L-arginine from L-ornithine and carbamoyl phosphate: step 3/3. The chain is Argininosuccinate lyase from Pelagibacter ubique (strain HTCC1062).